We begin with the raw amino-acid sequence, 417 residues long: 1-deoxy-D-xylulose 5-phosphate reductoisomerase (417 aa).

NADPH is bound by residues T10, G11, S12, I13, G36, R37, N38, and N130. K131 contacts 1-deoxy-D-xylulose 5-phosphate. Position 132 (E132) interacts with NADPH. D156 is a binding site for Mn(2+). 1-deoxy-D-xylulose 5-phosphate-binding residues include S157, E158, S194, and H217. A Mn(2+)-binding site is contributed by E158. G223 lines the NADPH pocket. Residues S230, N235, K236, and E239 each coordinate 1-deoxy-D-xylulose 5-phosphate. Position 239 (E239) interacts with Mn(2+).

This sequence belongs to the DXR family. The cofactor is Mg(2+). Mn(2+) is required as a cofactor.

The catalysed reaction is 2-C-methyl-D-erythritol 4-phosphate + NADP(+) = 1-deoxy-D-xylulose 5-phosphate + NADPH + H(+). It participates in isoprenoid biosynthesis; isopentenyl diphosphate biosynthesis via DXP pathway; isopentenyl diphosphate from 1-deoxy-D-xylulose 5-phosphate: step 1/6. Functionally, catalyzes the NADPH-dependent rearrangement and reduction of 1-deoxy-D-xylulose-5-phosphate (DXP) to 2-C-methyl-D-erythritol 4-phosphate (MEP). The polypeptide is 1-deoxy-D-xylulose 5-phosphate reductoisomerase (Synechococcus sp. (strain CC9902)).